The primary structure comprises 483 residues: Glutamate--tRNA ligase (483 aa).

Residues 11-21 (PSPTGHLHIGN) carry the 'HIGH' region motif. Zn(2+)-binding residues include Cys-108, Cys-110, Cys-135, and His-137. The 'KMSKS' region signature appears at 252-256 (KLSKR). ATP is bound at residue Lys-255.

This sequence belongs to the class-I aminoacyl-tRNA synthetase family. Glutamate--tRNA ligase type 1 subfamily. In terms of assembly, monomer. It depends on Zn(2+) as a cofactor.

The protein resides in the cytoplasm. The catalysed reaction is tRNA(Glu) + L-glutamate + ATP = L-glutamyl-tRNA(Glu) + AMP + diphosphate. In terms of biological role, catalyzes the attachment of glutamate to tRNA(Glu) in a two-step reaction: glutamate is first activated by ATP to form Glu-AMP and then transferred to the acceptor end of tRNA(Glu). This chain is Glutamate--tRNA ligase, found in Bacillus pumilus (strain SAFR-032).